Consider the following 325-residue polypeptide: NAD kinase (325 aa).

Residue Asp-91 is the Proton acceptor of the active site. NAD(+) contacts are provided by residues 91–92 (DG), His-96, 165–166 (ND), His-176, His-193, Asp-195, and 206–211 (TAYALS).

It belongs to the NAD kinase family. A divalent metal cation serves as cofactor.

The protein resides in the cytoplasm. It carries out the reaction NAD(+) + ATP = ADP + NADP(+) + H(+). In terms of biological role, involved in the regulation of the intracellular balance of NAD and NADP, and is a key enzyme in the biosynthesis of NADP. Catalyzes specifically the phosphorylation on 2'-hydroxyl of the adenosine moiety of NAD to yield NADP. This Psychrobacter arcticus (strain DSM 17307 / VKM B-2377 / 273-4) protein is NAD kinase.